The following is a 104-amino-acid chain: Phosphate metabolism protein 6 (104 aa).

The helical transmembrane segment at 76-96 (IIVIIIVLLLYSLTMVGLFYV) threads the bilayer.

It localises to the vacuole membrane. The sequence is that of Phosphate metabolism protein 6 (PHM6) from Saccharomyces cerevisiae (strain ATCC 204508 / S288c) (Baker's yeast).